A 379-amino-acid chain; its full sequence is Probable homogentisate phytyltransferase 2, chloroplastic (379 aa).

The interval 1-39 (MASLASPPLPCRAAATASRSGRPAPRLLGPPPPPASPLL) is disordered. The transit peptide at 1-65 (MASLASPPLP…WSRRDAVRVC (65 aa)) directs the protein to the chloroplast. The next 8 membrane-spanning stretches (helical) occupy residues 121 to 141 (WLVFKAFYGLVALICGNGYIV), 174 to 194 (LVVLFAAAGFSIVVTNFGPFI), 195 to 215 (TSLYCLGLFLGTIYSVPPFRL), 220 to 240 (VAAFLIIATVRGFLLNFGVYY), 252 to 272 (WSSPVAFITCFVTLFALVIAI), 299 to 319 (IAFLGSGLLIANYVAAIAVAF), 328 to 348 (TVMVPVHAALAVGIIFQTWVL), and 361 to 378 (YYRFIWNLFYAEYIFFPL).

Belongs to the UbiA prenyltransferase family.

It is found in the plastid. Its subcellular location is the chloroplast thylakoid membrane. It catalyses the reaction phytyl diphosphate + homogentisate + H(+) = 2-methyl-6-phytyl-1,4-benzene-1,4-diol + CO2 + diphosphate. Its pathway is cofactor biosynthesis; tocopherol biosynthesis. Its function is as follows. Involved in the synthesis of tocopherol (vitamin E). Catalyzes the condensation of homogentisate and phytyl diphosphate to form dimethylphytylhydrquinone. The polypeptide is Probable homogentisate phytyltransferase 2, chloroplastic (HPT2) (Oryza sativa subsp. japonica (Rice)).